Here is a 137-residue protein sequence, read N- to C-terminus: Cellular retinoic acid-binding protein 1 (137 aa).

Positions 21 to 31 (KALGVNTMLRK) match the Nuclear localization signal motif. 132 to 134 (RIY) lines the all-trans-retinoate pocket.

The protein belongs to the calycin superfamily. Fatty-acid binding protein (FABP) family.

The protein localises to the cytoplasm. Functionally, cytosolic CRABPs may regulate the access of retinoic acid to the nuclear retinoic acid receptors. This is Cellular retinoic acid-binding protein 1 (crabp1) from Takifugu rubripes (Japanese pufferfish).